The sequence spans 377 residues: Guanine nucleotide exchange factor for Rab-3A (377 aa).

A disordered region spans residues 23-57 (WKNLGPSKGNRKSPGGLVEASASWEEAGGEEHPAA). The stretch at 77 to 128 (SEFLKEELYKAQKELKLKDEECERLCKVRAQLEQELEELTASLFEEAHKMVR) forms a coiled coil. The disordered stretch occupies residues 167-198 (PASPNRELHPQLLSPTKAGPRKGHSRQKSTSS). Phosphoserine is present on residues S169 and S180.

Belongs to the SEC2 family. As to quaternary structure, interacts with RAB3A and IHPK1 through the coiled-coil domain. This interaction is competitive. IHPK1 kinase activity is not required for this interaction. As to expression, selectively localized to the brain (at protein level).

In terms of biological role, guanine nucleotide exchange factor (GEF) which may activate RAB3A, a GTPase that regulates synaptic vesicle exocytosis. Promotes the exchange of GDP to GTP, converting inactive GDP-bound Rab proteins into their active GTP-bound form. May also activate RAB8A and RAB8B. In Rattus norvegicus (Rat), this protein is Guanine nucleotide exchange factor for Rab-3A (Rab3il1).